The sequence spans 168 residues: NADH-ubiquinone oxidoreductase chain 6 (168 aa).

The next 5 membrane-spanning stretches (helical) occupy residues Met1 to Ala21, Ile27 to Leu47, Val50 to Tyr70, Val87 to Ser107, and Trp143 to Val163.

This sequence belongs to the complex I subunit 6 family. As to quaternary structure, core subunit of respiratory chain NADH dehydrogenase (Complex I) which is composed of 45 different subunits.

The protein localises to the mitochondrion inner membrane. The catalysed reaction is a ubiquinone + NADH + 5 H(+)(in) = a ubiquinol + NAD(+) + 4 H(+)(out). Its function is as follows. Core subunit of the mitochondrial membrane respiratory chain NADH dehydrogenase (Complex I) which catalyzes electron transfer from NADH through the respiratory chain, using ubiquinone as an electron acceptor. Essential for the catalytic activity and assembly of complex I. This Didelphis virginiana (North American opossum) protein is NADH-ubiquinone oxidoreductase chain 6 (MT-ND6).